Reading from the N-terminus, the 340-residue chain is Leucine-rich repeat-containing protein 23 (340 aa).

Residues 1 to 27 are compositionally biased toward acidic residues; it reads MSDEDDVDDVDAEQDEVESDKEIEEWE. The interval 1–38 is disordered; sequence MSDEDDVDDVDAEQDEVESDKEIEEWEDYRKETEEASE. 6 LRR repeats span residues 89 to 110, 111 to 134, 177 to 197, 198 to 219, 220 to 241, and 243 to 264; these read HLRY…NSLT, HLLW…PYLQ, SLHT…IYLP, KLKN…ENLS, NLTT…SQEM, and SLQY…AKLR. Residues 205–340 form an interaction with RSPH9 region; it reads AQNLLKKVEG…QDMEPYLPPV (136 aa). The region spanning 277–315 is the LRRCT domain; it reads NPCADETDYRQEALVQMAHLERLDKEFYEDDDRAEAEEI. Positions 305–328 form a coiled coil; the sequence is EDDDRAEAEEIRQRLKEEQDQDLD. A disordered region spans residues 317 to 340; sequence QRLKEEQDQDLDPDQDMEPYLPPV. Over residues 323–333 the composition is skewed to acidic residues; that stretch reads QDQDLDPDQDM.

Component of the axonemal radial spoke complex. Interacts with RSPH3A and RSPH3B. Interacts with RSPH9. As to expression, expressed in the testis (at protein level).

Its subcellular location is the cytoplasm. The protein resides in the cytoskeleton. It localises to the flagellum axoneme. Functionally, essential for sperm motility and male fertility. Plays an important role in the proper assembly of the third radial spoke (RS3) head and the bridge structure between RS2 and RS3 in the sperm flagella. In Mus musculus (Mouse), this protein is Leucine-rich repeat-containing protein 23 (Lrrc23).